The following is a 489-amino-acid chain: Otolin-1-A (489 aa).

Positions Met-1–Ala-23 are cleaved as a signal peptide. The tract at residues Lys-27–Val-57 is disordered. N-linked (GlcNAc...) asparagine glycosylation is present at Asn-109. Positions Gly-133–Lys-335 are disordered. A compositionally biased stretch (gly residues) spans Gly-142 to Gly-151. Collagen-like domains lie at Gly-145–Lys-204, Gly-205–Lys-255, and Gly-264–Arg-323. Over residues Gln-192–Asp-206 the composition is skewed to basic and acidic residues. N-linked (GlcNAc...) asparagine glycosylation occurs at Asn-225. A compositionally biased stretch (gly residues) spans Gly-226 to Gly-235. Residues Ile-248–Asp-257 show a composition bias toward basic and acidic residues. Residue Asn-287 is glycosylated (N-linked (GlcNAc...) asparagine). Residues Asp-290 to Glu-310 show a composition bias toward low complexity. A C1q domain is found at Ala-351 to Lys-488. Residues Asn-391 and Asn-396 are each glycosylated (N-linked (GlcNAc...) asparagine).

It belongs to the OTOL1 family. Homooligomer; disulfide-linked; probably forms homotrimers. Interacts with otomp.

It is found in the secreted. Its subcellular location is the extracellular space. It localises to the extracellular matrix. Its function is as follows. Collagen-like protein, which provides an organic scaffold for otoliths onto the sensory epithelium of the inner ear. Acts as a scaffold for biomineralization by sequestering calcium. The sequence is that of Otolin-1-A (otol1a) from Danio rerio (Zebrafish).